We begin with the raw amino-acid sequence, 134 residues long: Interferon-induced transmembrane protein 5 (134 aa).

The segment covering 1–20 (MDTSYPREDPRAPSSRKADA) has biased composition (basic and acidic residues). Positions 1–31 (MDTSYPREDPRAPSSRKADAAAHTALSMGTP) are disordered. Over 1 to 39 (MDTSYPREDPRAPSSRKADAAAHTALSMGTPGPTPRDHM) the chain is Extracellular. The helical transmembrane segment at 40–60 (LWSVFSTMYLNLCCLGFLALV) threads the bilayer. Residues C52, C53, and C86 are each lipidated (S-palmitoyl cysteine). Residues 61 to 88 (HSVKARDQKMAGNLEAARQYGSKAKCYN) are Cytoplasmic-facing. A helical transmembrane segment spans residues 89 to 109 (ILAAMWTLVPPLLLLGLVVTG). Topologically, residues 110-134 (ALHLSKLAKDSAAFFSTKFDEEDYN) are extracellular.

Belongs to the CD225/Dispanin family. As to quaternary structure, interacts with FKBP11. In terms of processing, palmitoylated. As to expression, detected in embryonic bone (at protein level). Highly expressed in osteoblasts of adults and embryos. Expressed in primitive hemopoietic cells.

The protein resides in the cell membrane. Functionally, required for normal bone mineralization. This Mus musculus (Mouse) protein is Interferon-induced transmembrane protein 5 (Ifitm5).